We begin with the raw amino-acid sequence, 79 residues long: Small ribosomal subunit protein uS17 (79 aa).

It belongs to the universal ribosomal protein uS17 family. Part of the 30S ribosomal subunit.

One of the primary rRNA binding proteins, it binds specifically to the 5'-end of 16S ribosomal RNA. In Roseobacter denitrificans (strain ATCC 33942 / OCh 114) (Erythrobacter sp. (strain OCh 114)), this protein is Small ribosomal subunit protein uS17.